We begin with the raw amino-acid sequence, 266 residues long: Luciferase (266 aa).

A helical membrane pass occupies residues 22–41 (GLAAACCALAVASTIAFPYI).

The protein belongs to the fungal luciferase family.

It is found in the membrane. It carries out the reaction 3-hydroxyhispidin + O2 = (E)-caffeoylpyruvate + hnu + CO2. The catalysed reaction is 3-hydroxyhispidin + O2 = 4-[(E)-2-(3,4-dihydroxyphenyl)ethenyl]-1,7-dihydroxy-2,3,5-trioxabicyclo[2.2.2]oct-7-en-6-one. In terms of biological role, luciferase; part of the gene cluster that mediates the fungal bioluminescence cycle. Uses the fungal luciferin 3-hydroxyhispidin as a substrate to produce an endoperoxide as a high-energy intermediate with decomposition that yields oxyluciferin (also known as caffeoylpyruvate) and light emission. The fungal bioluminescence cycle begins with the hispidin synthetase that catalyzes the formation of hispidin which is further hydroxylated by the hispidin-3-hydroxylase, yielding the fungal luciferin 3-hydroxyhispidin. The luciferase then produces an endoperoxide as a high-energy intermediate with decomposition that yields oxyluciferin and light emission. Oxyluciferin can be recycled to caffeic acid by caffeoylpyruvate hydrolase. This chain is Luciferase, found in Armillaria gallica (Bulbous honey fungus).